The following is a 347-amino-acid chain: N-acetyl-gamma-glutamyl-phosphate reductase (347 aa).

The active site involves cysteine 153.

This sequence belongs to the NAGSA dehydrogenase family. Type 1 subfamily.

The protein resides in the cytoplasm. The enzyme catalyses N-acetyl-L-glutamate 5-semialdehyde + phosphate + NADP(+) = N-acetyl-L-glutamyl 5-phosphate + NADPH + H(+). It participates in amino-acid biosynthesis; L-arginine biosynthesis; N(2)-acetyl-L-ornithine from L-glutamate: step 3/4. In terms of biological role, catalyzes the NADPH-dependent reduction of N-acetyl-5-glutamyl phosphate to yield N-acetyl-L-glutamate 5-semialdehyde. This is N-acetyl-gamma-glutamyl-phosphate reductase from Mycobacterium avium (strain 104).